A 69-amino-acid polypeptide reads, in one-letter code: Small integral membrane protein 20 (69 aa).

The Mitochondrial matrix segment spans residues 1 to 8; it reads MAAARNLR. A helical membrane pass occupies residues 9–29; the sequence is TALIFGGFISMVGAAFYPIYF. At 30 to 69 the chain is on the mitochondrial intermembrane side; sequence RPLLRLEEYQKEQAVNRAGIVQEDVQPPGLKVWSDPFGRK. Phenylalanine 66 is subject to Phenylalanine amide.

Component of the MITRAC (mitochondrial translation regulation assembly intermediate of cytochrome c oxidase complex) complex, the core components of this complex being Coa3/Mitrac12 and Cox14. Interacts with Coa3/Mitrac12 and Cox4i1. Directly interacts with newly synthesized Mt-Co1/Cox1. As to expression, highly expressed in the hypothalamus, substantia nigra reticulata, Edinger-Westphal nucleus, and nucleus of the solitary tract/dorsal motor nucleus of the vagus, the spinal cord, and sensory ganglia (at protein level). Also expressed in the heart, thymus, esophagus, stomach, spleen, lung, pituitary gland, kidney, jejunum, duodenum, ileum, cerebrum, pons, and colon (at protein level). Expressed in preadipocytes and apidocytes (at protein level). Expressed in pancreatic islet cells (at protein level).

It localises to the mitochondrion inner membrane. It is found in the secreted. Functionally, component of the MITRAC (mitochondrial translation regulation assembly intermediate of cytochrome c oxidase complex) complex, that regulates cytochrome c oxidase assembly. Promotes the progression of complex assembly after the association of Mt-Co1/Cox11 with Cox4I1 and Cox6c. Chaperone-like assembly factor required to stabilize newly synthesized Mt-Co1/Cox1 and to prevent its premature turnover. Its function is as follows. Peptide involved in a broad spectrum of regulatory functions. Is a ligand for GPR173. As part of the reproductive cycle, it regulates gonadotropin-releasing hormone (GnRH) signaling in the hypothalamus and pituitary gland which augments the release of luteinizing hormone. More specifically, it regulates the expression of transcription factors CEBPB and POU2F1/OCT1 through the cAMP-PKA signaling pathway, which subsequently regulate the expression of GNRHR and KISS1. Plays a protective role in memory retention through activation of GNRHR. Regulates the secretion of AVP by hypothalamic neurons. Plays a role in the transduction of the itch sensation. Induces anxiolytic effects, reducing behavior associated with anxiety. Regulates food intake as well as satiation and satiety by increasing NUCB2 expression in neurons. In the ovary, it regulates follicular growth by stimulating granulosa cell proliferation by increasing the expression of GPR173, CREB1, CYP19A1, KITLG, FSHR, and LHCGR. It also increases the production of estradiol (E2). In the heart, it regulates contractility and relaxation by activating the AKT1-NOS3 and MAPK1-MAPK3 signaling pathways. It also plays a cardioprotective role during ischemia, where it activates the SAFE and RISK pathways. Stimulates the proliferation and differentiation of preadipocytes. In pancreatic islet cells, it induces proliferation of islet cells as well as the production of INS1 and INS2 through activation of the MAPK1-MAPK3 signaling pathways. The chain is Small integral membrane protein 20 from Rattus norvegicus (Rat).